The chain runs to 339 residues: Dual specificity protein phosphatase 12 (339 aa).

Residue M1 is modified to N-acetylmethionine. Residues 1–22 (MLEVQSSNHGCERQAPTTSPAS) show a composition bias toward polar residues. The segment at 1–25 (MLEVQSSNHGCERQAPTTSPASSAG) is disordered. Residues 26-170 (HAVEVRPGLY…LKLYEAMGHE (145 aa)) form the Tyrosine-protein phosphatase domain. The active-site Phosphocysteine intermediate is C114. Residue 115 to 120 (HAGVSR) coordinates substrate. S334 carries the post-translational modification Phosphoserine.

This sequence belongs to the protein-tyrosine phosphatase family. Non-receptor class dual specificity subfamily. Monomer. Zn(2+) is required as a cofactor.

The protein resides in the nucleus. Its subcellular location is the cytoplasm. It localises to the cytosol. It catalyses the reaction O-phospho-L-tyrosyl-[protein] + H2O = L-tyrosyl-[protein] + phosphate. The catalysed reaction is O-phospho-L-seryl-[protein] + H2O = L-seryl-[protein] + phosphate. The enzyme catalyses O-phospho-L-threonyl-[protein] + H2O = L-threonyl-[protein] + phosphate. Functionally, dual specificity phosphatase; can dephosphorylate both phosphotyrosine and phosphoserine or phosphothreonine residues. Can dephosphorylate glucokinase (in vitro). Has phosphatase activity with the synthetic substrate 6,8-difluoro-4-methylumbelliferyl phosphate and other in vitro substrates. This chain is Dual specificity protein phosphatase 12 (Dusp12), found in Rattus norvegicus (Rat).